The following is a 468-amino-acid chain: Probable Xaa-Pro aminopeptidase PEPP (468 aa).

Aspartate 264, aspartate 275, glutamate 398, and glutamate 438 together coordinate Mn(2+).

It belongs to the peptidase M24B family. The cofactor is Mn(2+).

The enzyme catalyses Release of any N-terminal amino acid, including proline, that is linked to proline, even from a dipeptide or tripeptide.. Catalyzes the removal of a penultimate prolyl residue from the N-termini of peptides. The polypeptide is Probable Xaa-Pro aminopeptidase PEPP (PEPP) (Ajellomyces dermatitidis (strain ER-3 / ATCC MYA-2586) (Blastomyces dermatitidis)).